The following is a 350-amino-acid chain: Probable DNA polymerase III subunit delta (350 aa).

Belongs to the DNA polymerase HolA subunit family. Component of the DNA clamp loading complex consisting of tau(3):delta(1):delta'(1). The DNA polymerase III holoenzyme complex contains at least 10 different subunits organized into 3 functionally essential subassemblies: the Pol III core, the beta sliding clamp processivity factor and the clamp-loading complex. The Pol III core (subunits alpha, epsilon and theta) contains the polymerase and the 3'-5' exonuclease proofreading activities. The polymerase is tethered to the template via the dimeric beta sliding clamp processivity factor. The DNA clamp-loading complex assembles the beta sliding clamp onto the primed template and plays a central role in the organization and communication at the replication fork.

It carries out the reaction DNA(n) + a 2'-deoxyribonucleoside 5'-triphosphate = DNA(n+1) + diphosphate. Part of the beta sliding clamp loading complex, which hydrolyzes ATP to load the beta clamp onto primed DNA to form the DNA replication pre-initiation complex. DNA polymerase III is a complex, multichain enzyme responsible for most of the replicative synthesis in bacteria. This DNA polymerase also exhibits 3'-5' exonuclease activity. The delta subunit is the wrench that will open the beta subunit dimer. The DNA clamp loading complex (tau(3),delta,delta') is thought to load beta dimers onto DNA by binding ATP which alters the complex's conformation so it can bind beta sliding clamp dimers and open them at one interface. Primed DNA is recognized, ATP is hydrolyzed releasing the clamp loading complex and closing the beta sliding clamp ring around the primed DNA. This chain is Probable DNA polymerase III subunit delta, found in Aquifex aeolicus (strain VF5).